A 1272-amino-acid polypeptide reads, in one-letter code: AF4/FMR2 family member 2 (1272 aa).

7 disordered regions span residues 151–190, 204–231, 372–401, 422–497, 557–694, 715–743, and 772–899; these read SNRK…DPPQ, PQIG…DTFK, TLQK…EDDL, KAKP…QLDK, IREK…ETLQ, TLST…PAMQ, and PGQN…QDKN. Over residues 155-164 the composition is skewed to basic and acidic residues; sequence SKSEWPRDSH. Residues 165–179 show a composition bias toward low complexity; sequence NTSPAQASQTSSQPN. A compositionally biased stretch (polar residues) spans 180 to 189; that stretch reads KMQTSTQDPP. Over residues 210 to 227 the composition is skewed to low complexity; sequence EKSNPSSKEENNPNSGGE. A compositionally biased stretch (polar residues) spans 374 to 384; sequence QKWSDPSSRAS. A compositionally biased stretch (basic and acidic residues) spans 387–396; it reads MLEDDLKLSS. Ser-395 carries the post-translational modification Phosphoserine. Positions 436–450 are enriched in polar residues; that stretch reads TPQSTPATQTNVGSG. Thr-482 is subject to Phosphothreonine. Over residues 580 to 590 the composition is skewed to polar residues; sequence STSVDTVSQRT. Basic and acidic residues predominate over residues 620 to 633; it reads PKEKGSVELPDPPR. A compositionally biased stretch (basic residues) spans 634 to 644; it reads SRNKATAHKPV. The segment covering 715–734 has biased composition (low complexity); sequence TLSTLTNGNSNNLSTSNEET. Residues 815–831 are compositionally biased toward basic and acidic residues; the sequence is PAETAEKIPEKKQRLED. Over residues 841–850 the composition is skewed to pro residues; sequence CISPAPPHKP. Polar residues predominate over residues 887–899; it reads VSGNNGHFGQDKN.

It belongs to the AF4 family. Highly expressed in the hippocampus, the piriform cortex, Purkinje cells and the cingulate gyrus.

Its subcellular location is the nucleus speckle. Its function is as follows. RNA-binding protein. Might be involved in alternative splicing regulation through an interaction with G-quartet RNA structure. The polypeptide is AF4/FMR2 family member 2 (Mus musculus (Mouse)).